Consider the following 635-residue polypeptide: Capsid protein (635 aa).

The tract at residues 571–608 (KAPETEKEEERESETSFTSAESSSEGDGSSDDQAERRA) is disordered. Over residues 573–584 (PETEKEEERESE) the composition is skewed to basic and acidic residues. Over residues 585 to 597 (TSFTSAESSSEGD) the composition is skewed to low complexity.

This sequence belongs to the anelloviridae capsid protein family.

The protein resides in the virion. Self-assembles to form an icosahedral capsid with a T=1 symmetry, about 30 nm in diameter, and consisting of 60 capsid proteins. The capsid encapsulates the genomic DNA. Capsid protein is involved in attachment and entry into the host cell. This Torque teno sus virus 1 (isolate Sd-TTV31) protein is Capsid protein.